Reading from the N-terminus, the 99-residue chain is NADH-quinone oxidoreductase subunit K (99 aa).

The next 3 membrane-spanning stretches (helical) occupy residues 3 to 23 (ILFS…GILI), 28 to 48 (LIVF…FVAF), and 59 to 79 (IWVF…LAII).

This sequence belongs to the complex I subunit 4L family. In terms of assembly, NDH-1 is composed of 14 different subunits. Subunits NuoA, H, J, K, L, M, N constitute the membrane sector of the complex.

It localises to the cell inner membrane. The catalysed reaction is a quinone + NADH + 5 H(+)(in) = a quinol + NAD(+) + 4 H(+)(out). Functionally, NDH-1 shuttles electrons from NADH, via FMN and iron-sulfur (Fe-S) centers, to quinones in the respiratory chain. The immediate electron acceptor for the enzyme in this species is believed to be ubiquinone. Couples the redox reaction to proton translocation (for every two electrons transferred, four hydrogen ions are translocated across the cytoplasmic membrane), and thus conserves the redox energy in a proton gradient. In Protochlamydia amoebophila (strain UWE25), this protein is NADH-quinone oxidoreductase subunit K.